Reading from the N-terminus, the 132-residue chain is Small ribosomal subunit protein uS8 (132 aa).

The protein belongs to the universal ribosomal protein uS8 family. In terms of assembly, part of the 30S ribosomal subunit. Contacts proteins S5 and S12.

Functionally, one of the primary rRNA binding proteins, it binds directly to 16S rRNA central domain where it helps coordinate assembly of the platform of the 30S subunit. The chain is Small ribosomal subunit protein uS8 from Exiguobacterium sibiricum (strain DSM 17290 / CCUG 55495 / CIP 109462 / JCM 13490 / 255-15).